A 119-amino-acid polypeptide reads, in one-letter code: NADH-quinone oxidoreductase subunit A (119 aa).

A run of 3 helical transmembrane segments spans residues V9–V29, L63–V83, and V88–A108.

This sequence belongs to the complex I subunit 3 family. As to quaternary structure, NDH-1 is composed of 14 different subunits. Subunits NuoA, H, J, K, L, M, N constitute the membrane sector of the complex.

It localises to the cell inner membrane. The catalysed reaction is a quinone + NADH + 5 H(+)(in) = a quinol + NAD(+) + 4 H(+)(out). Functionally, NDH-1 shuttles electrons from NADH, via FMN and iron-sulfur (Fe-S) centers, to quinones in the respiratory chain. The immediate electron acceptor for the enzyme in this species is believed to be ubiquinone. Couples the redox reaction to proton translocation (for every two electrons transferred, four hydrogen ions are translocated across the cytoplasmic membrane), and thus conserves the redox energy in a proton gradient. The polypeptide is NADH-quinone oxidoreductase subunit A (Verminephrobacter eiseniae (strain EF01-2)).